The sequence spans 63 residues: MLNFEAIIETGDQVIQQISFDLQHISSVLNTELFDPFEVCCYRGGNYWELESAEEFSGDDESS.

The protein is Non-structural protein 3b of Avian infectious bronchitis virus (strain UK/183/66) (IBV).